The chain runs to 666 residues: Endogenous retrovirus group K member 7 Gag polyprotein (666 aa).

Glycine 2 carries the N-myristoyl glycine lipid modification. 2 disordered regions span residues 165–205 (GKGP…NKTQ) and 217–264 (ELQY…GSEL). The segment covering 232-247 (GMPPAPQGRAPYPQPP) has biased composition (pro residues). CCHC-type zinc fingers lie at residues 544 to 561 (GKCYNCGQIGHLKKNCPV) and 580 to 597 (DLCPRCKKGKHWASQCRS). Positions 598 to 641 (KFDKNGQPLSGNEQRGQPQAPQQTGAFPIQPFVPQGFQEQQPPL) are disordered. The segment covering 604-622 (QPLSGNEQRGQPQAPQQTG) has biased composition (polar residues).

The protein belongs to the beta type-B retroviral Gag protein family. HERV class-II K(HML-2) gag subfamily. Post-translationally, specific enzymatic cleavages may yield mature proteins. In terms of processing, myristoylation is essential for retroviral assembly. Alteration of the glycine residue leads to a block in the budding of particles and an accumulation of Gag inside the cell.

Its subcellular location is the cell membrane. The products of the Gag polyproteins of infectious retroviruses perform highly complex orchestrated tasks during the assembly, budding, maturation, and infection stages of the viral replication cycle. During viral assembly, the proteins form membrane associations and self-associations that ultimately result in budding of an immature virion from the infected cell. Gag precursors also function during viral assembly to selectively bind and package two plus strands of genomic RNA. Endogenous Gag proteins may have kept, lost or modified their original function during evolution. This chain is Endogenous retrovirus group K member 7 Gag polyprotein (ERVK-7), found in Homo sapiens (Human).